The sequence spans 255 residues: Octanoyltransferase (255 aa).

Residues Gly-54–Val-238 enclose the BPL/LPL catalytic domain. Residues Arg-92–His-99, Ala-167–Gly-169, and Gly-180–Ala-182 each bind substrate. Residue Cys-198 is the Acyl-thioester intermediate of the active site.

It belongs to the LipB family.

It is found in the cytoplasm. The catalysed reaction is octanoyl-[ACP] + L-lysyl-[protein] = N(6)-octanoyl-L-lysyl-[protein] + holo-[ACP] + H(+). It participates in protein modification; protein lipoylation via endogenous pathway; protein N(6)-(lipoyl)lysine from octanoyl-[acyl-carrier-protein]: step 1/2. Functionally, catalyzes the transfer of endogenously produced octanoic acid from octanoyl-acyl-carrier-protein onto the lipoyl domains of lipoate-dependent enzymes. Lipoyl-ACP can also act as a substrate although octanoyl-ACP is likely to be the physiological substrate. This chain is Octanoyltransferase, found in Rhodopseudomonas palustris (strain BisB5).